Reading from the N-terminus, the 146-residue chain is Large ribosomal subunit protein uL15 (146 aa).

The segment at 1–51 is disordered; sequence MKLHELKPAKGSRKVRNRVGRGTSSGNGKTSGRGQKGQKARSGGGVRLGFE. Over residues 10–19 the composition is skewed to basic residues; the sequence is KGSRKVRNRV. Composition is skewed to gly residues over residues 23 to 35 and 42 to 51; these read TSSG…GRGQ and SGGGVRLGFE.

The protein belongs to the universal ribosomal protein uL15 family. In terms of assembly, part of the 50S ribosomal subunit.

Its function is as follows. Binds to the 23S rRNA. In Streptococcus equi subsp. equi (strain 4047), this protein is Large ribosomal subunit protein uL15.